The chain runs to 181 residues: Bifunctional protein PyrR (181 aa).

A PRPP-binding motif is present at residues 101–113; sequence VIVVDDVLYTGRT.

Belongs to the purine/pyrimidine phosphoribosyltransferase family. PyrR subfamily. In terms of assembly, homodimer and homohexamer; in equilibrium.

The enzyme catalyses UMP + diphosphate = 5-phospho-alpha-D-ribose 1-diphosphate + uracil. In terms of biological role, regulates transcriptional attenuation of the pyrimidine nucleotide (pyr) operon by binding in a uridine-dependent manner to specific sites on pyr mRNA. This disrupts an antiterminator hairpin in the RNA and favors formation of a downstream transcription terminator, leading to a reduced expression of downstream genes. Also displays a weak uracil phosphoribosyltransferase activity which is not physiologically significant. This is Bifunctional protein PyrR from Bacillus velezensis (strain DSM 23117 / BGSC 10A6 / LMG 26770 / FZB42) (Bacillus amyloliquefaciens subsp. plantarum).